A 291-amino-acid polypeptide reads, in one-letter code: Protein US2 (291 aa).

Gly2 carries the N-acetylglycine; by host modification. The tract at residues 223 to 281 (NKPRPASSRPHPATHPTQRPCFTCMGRPEIPDEPSWQTGDDDPQNPGPPLAVGDEWPPS) is disordered.

The protein belongs to the herpesviridae HHV-1 US2 protein family. In terms of assembly, interacts with host KRT18. Interacts with host MAP3K7; this interaction induces host NF-kappa-B pathway.

Its subcellular location is the virion. It localises to the host cytoplasm. The protein resides in the host cell surface. It is found in the host nucleus. Plays a role in the activation of the host NF-kappa-B pathway by interacting with and thus activating the component MAP3K7. The chain is Protein US2 from Human herpesvirus 2 (strain HG52) (HHV-2).